A 686-amino-acid chain; its full sequence is Acyl-CoA synthetase short-chain family member 3, mitochondrial (686 aa).

Residues Met-1–Gly-29 constitute a mitochondrion transit peptide. A CoA-binding site is contributed by Glu-226–Arg-229. ATP contacts are provided by residues Gly-424–Arg-426 and Asp-445–Thr-450. Residue Lys-517 is modified to N6-succinyllysine. Lys-523 carries the post-translational modification N6-acetyllysine. ATP-binding residues include Asp-538, Arg-553, and Arg-564. Arg-623 is a CoA binding site.

The protein belongs to the ATP-dependent AMP-binding enzyme family.

It is found in the mitochondrion matrix. The catalysed reaction is acetate + ATP + CoA = acetyl-CoA + AMP + diphosphate. The enzyme catalyses propanoate + ATP + CoA = propanoyl-CoA + AMP + diphosphate. It carries out the reaction butanoate + ATP + CoA = butanoyl-CoA + AMP + diphosphate. In terms of biological role, catalyzes the synthesis of acetyl-CoA from short-chain fatty acids. Propionate is the preferred substrate but can also utilize acetate and butyrate with a much lower affinity. The chain is Acyl-CoA synthetase short-chain family member 3, mitochondrial (ACSS3) from Bos taurus (Bovine).